An 89-amino-acid chain; its full sequence is Small ribosomal subunit protein uS15 (89 aa).

Belongs to the universal ribosomal protein uS15 family. As to quaternary structure, part of the 30S ribosomal subunit. Forms a bridge to the 50S subunit in the 70S ribosome, contacting the 23S rRNA.

Functionally, one of the primary rRNA binding proteins, it binds directly to 16S rRNA where it helps nucleate assembly of the platform of the 30S subunit by binding and bridging several RNA helices of the 16S rRNA. Forms an intersubunit bridge (bridge B4) with the 23S rRNA of the 50S subunit in the ribosome. In Streptococcus equi subsp. zooepidemicus (strain H70), this protein is Small ribosomal subunit protein uS15.